The primary structure comprises 542 residues: Neutral amino acid transporter B(0) (542 aa).

Met-1 carries the post-translational modification N-acetylmethionine. Topologically, residues 1-52 are cytoplasmic; sequence MVADPPRGDSKGLAAAEPTANGGLALASIEDQGEAAGGCCGSRDRVRRCLRA. Residues 53–82 form a helical membrane-spanning segment; that stretch reads NLLVLLTVVAVVVGVALGLGVSGAGGALAL. Topologically, residues 83–95 are extracellular; the sequence is GPERLSAFVFPGE. The chain crosses the membrane as a helical span at residues 96-117; it reads LLLRLLRMIILPLVVCSLIGGA. Topologically, residues 118–131 are cytoplasmic; sequence ASLDPGALGRLGAW. Residues 132 to 154 form a helical membrane-spanning segment; it reads ALLFFLVTTLLASALGVALALAL. Residues 155-225 are Extracellular-facing; that stretch reads QPGAASAAIN…GTRVKVPVGQ (71 aa). N-linked (GlcNAc...) asparagine glycosylation is found at Asn-164 and Asn-213. Residues 226–249 traverse the membrane as a helical segment; it reads EVEGMNILGLVVFAIVFGVALRKL. Topologically, residues 250-258 are cytoplasmic; the sequence is GPEGELLIR. A helical membrane pass occupies residues 259–286; the sequence is FFNSFNEATMVLVSWIMWYAPVGIMFLV. Over 287-307 the chain is Extracellular; that stretch reads AGKIVEMEDVGLLFARLGKYI. Residues 308–329 form a helical membrane-spanning segment; that stretch reads LCCLLGHAIHGLLVLPLIYFLF. Residues 330 to 334 are Cytoplasmic-facing; that stretch reads TRKNP. The segment at residues 335–365 is an intramembrane region (discontinuously helical); that stretch reads YRFLWGIVTPLATAFGTSSSSATLPLMMKCV. At 366 to 374 the chain is on the cytoplasmic side; that stretch reads EENNGVAKH. A helical transmembrane segment spans residues 375 to 401; sequence ISRFILPIGATVNMDGAALFQCVAAVF. 3 residues coordinate Na(+): Gly-383, Thr-385, and Asn-387. The Extracellular segment spans residues 402 to 414; that stretch reads IAQLSEQSLDFVK. Residues 415–448 constitute an intramembrane region (discontinuously helical); sequence IITILVTATASSVGAAGIPAGGVLTLAIILEAVN. Topologically, residues 449–461 are extracellular; that stretch reads LPVDHISLILAVD. A helical membrane pass occupies residues 462–483; it reads WLVDRSCTVLNVEGDALGAGLL. Positions 472 and 476 each coordinate Na(+). Over 484–542 the chain is Cytoplasmic; that stretch reads QNYVDRTEVRSTEPELIQVKSELPLDPLPAPTEEGNPLLRHYRGPAGDATVASEKESVM. Phosphoserine is present on Ser-494. Thr-495 is subject to Phosphothreonine. Residues Ser-504, Ser-536, and Ser-540 each carry the phosphoserine modification. The disordered stretch occupies residues 509–542; that stretch reads DPLPAPTEEGNPLLRHYRGPAGDATVASEKESVM.

The protein belongs to the dicarboxylate/amino acid:cation symporter (DAACS) (TC 2.A.23) family. SLC1A5 subfamily. Homotrimer.

The protein resides in the cell membrane. The protein localises to the melanosome. The enzyme catalyses L-glutamine(out) + L-serine(in) + Na(+)(out) = L-glutamine(in) + L-serine(out) + Na(+)(in). It carries out the reaction L-glutamine(in) + L-serine(out) + Na(+)(out) = L-glutamine(out) + L-serine(in) + Na(+)(in). The catalysed reaction is L-threonine(in) + L-glutamine(out) + Na(+)(out) = L-threonine(out) + L-glutamine(in) + Na(+)(in). It catalyses the reaction L-threonine(out) + L-glutamine(in) + Na(+)(out) = L-threonine(in) + L-glutamine(out) + Na(+)(in). The enzyme catalyses L-asparagine(in) + L-glutamine(out) + Na(+)(out) = L-asparagine(out) + L-glutamine(in) + Na(+)(in). It carries out the reaction L-asparagine(out) + L-glutamine(in) + Na(+)(out) = L-asparagine(in) + L-glutamine(out) + Na(+)(in). The catalysed reaction is L-glutamine(in) + L-alanine(out) + Na(+)(out) = L-glutamine(out) + L-alanine(in) + Na(+)(in). It catalyses the reaction L-valine(out) + L-glutamine(in) + Na(+)(out) = L-valine(in) + L-glutamine(out) + Na(+)(in). The enzyme catalyses L-glutamine(in) + L-methionine(out) + Na(+)(out) = L-glutamine(out) + L-methionine(in) + Na(+)(in). It carries out the reaction L-glutamine(in) + L-glutamate(out) + Na(+)(out) + H(+)(out) = L-glutamine(out) + L-glutamate(in) + Na(+)(in) + H(+)(in). The catalysed reaction is D-serine(in) + L-glutamine(out) + Na(+)(out) = D-serine(out) + L-glutamine(in) + Na(+)(in). It catalyses the reaction D-serine(in) + L-alanine(out) + Na(+)(out) = D-serine(out) + L-alanine(in) + Na(+)(in). The enzyme catalyses nitrate(in) = nitrate(out). It carries out the reaction iodide(out) = iodide(in). The catalysed reaction is thiocyanate(in) = thiocyanate(out). Sodium-coupled antiporter of neutral amino acids. In a tri-substrate transport cycle, exchanges neutral amino acids between the extracellular and intracellular compartments, coupled to the inward cotransport of at least one sodium ion. The preferred substrate is the essential amino acid L-glutamine, a precursor for biosynthesis of proteins, nucleotides and amine sugars as well as an alternative fuel for mitochondrial oxidative phosphorylation. Exchanges L-glutamine with other neutral amino acids such as L-serine, L-threonine and L-asparagine in a bidirectional way. Provides L-glutamine to proliferating stem and activated cells driving the metabolic switch toward cell differentiation. The transport cycle is usually pH-independent, with the exception of L-glutamate. Transports extracellular L-glutamate coupled to the cotransport of one proton and one sodium ion in exchange for intracellular L-glutamine counter-ion. May provide for L-glutamate uptake in glial cells regulating glutamine/glutamate cycle in the nervous system. Can transport D-amino acids. Mediates D-serine release from the retinal glia potentially affecting NMDA receptor function in retinal neurons. Displays sodium- and amino acid-dependent but uncoupled channel-like anion conductance with a preference SCN(-) &gt;&gt; NO3(-) &gt; I(-) &gt; Cl(-). Through binding of the fusogenic protein syncytin-1/ERVW-1 may mediate trophoblasts syncytialization, the spontaneous fusion of their plasma membranes, an essential process in placental development. In Macaca fascicularis (Crab-eating macaque), this protein is Neutral amino acid transporter B(0) (SLC1A5).